A 552-amino-acid chain; its full sequence is Steroid transmembrane transporter SLC22A24 (552 aa).

A run of 12 helical transmembrane segments spans residues 16 to 36 (FQILQIAFFFVTSMITYTHIL), 144 to 164 (LKSVVQTLFMSGSLLGGLMFG), 175 to 197 (IYTWCLLQTAIADTCAIFAPTFV), 201 to 220 (IFRFLAGLTTINIMTNAFIL), 232 to 252 (IGITLILCSYSIGQMLLGGLA), 255 to 275 (IRDWYTLHLTVSIPLFVLSLL), 349 to 369 (IICFLSFIRLGASVPFMGLIL), 371 to 391 (LQDLGSSIFLFQVLFGAITFI), 407 to 427 (INQSLFFFLVGLCILVNTFLS), 435 to 455 (VVLATLGIGTVSAANATFFVH), 474 to 494 (VFSRMGSVLAPLLMTLVVYSP), and 496 to 516 (LPWVMYGVFPILAGLIVFCLP).

The protein belongs to the major facilitator (TC 2.A.1) superfamily. Organic cation transporter (TC 2.A.1.19) family.

It localises to the cell membrane. The catalysed reaction is estrone 3-sulfate(out) + glutarate(in) = estrone 3-sulfate(in) + glutarate(out). It carries out the reaction 17beta-estradiol 17-O-(beta-D-glucuronate)(out) + glutarate(in) = 17beta-estradiol 17-O-(beta-D-glucuronate)(in) + glutarate(out). The enzyme catalyses taurocholate(out) + glutarate(in) = taurocholate(in) + glutarate(out). It catalyses the reaction 5alpha-androstane-3alpha,17beta-diol 3-O-(beta-D-glucuronate)(out) + glutarate(in) = 5alpha-androstane-3alpha,17beta-diol 3-O-(beta-D-glucuronate)(in) + glutarate(out). The catalysed reaction is glycocholate(out) + glutarate(in) = glycocholate(in) + glutarate(out). It carries out the reaction dehydroepiandrosterone 3-sulfate(out) + glutarate(in) = dehydroepiandrosterone 3-sulfate(in) + glutarate(out). The enzyme catalyses glutarate(in) + succinate(out) = glutarate(out) + succinate(in). Its function is as follows. Renal transmembrane organic anion/dicarboxylate exchanger that participates in the reabsorption of conjugated steroids, as well as bile acids, driven by an outward gradient of dicarboxylates such as glutarate or succinate. Transports androstanediol glucuronide (5alpha-androstane-3alpha,17beta-diol 3-O-(beta-D-glucuronate)), estrone 3-sulfate, and estradiol-17-glucuronide (17beta-estradiol 17-O-(beta-D-glucuronate)), and taurocholate. The sequence is that of Steroid transmembrane transporter SLC22A24 from Oryctolagus cuniculus (Rabbit).